We begin with the raw amino-acid sequence, 104 residues long: N(4)-acetylcytidine amidohydrolase (104 aa).

The ASCH domain occupies T7–D104. K21 acts as the Proton acceptor in catalysis. Residue T24 is the Nucleophile of the active site. E74 (proton donor) is an active-site residue.

Belongs to the N(4)-acetylcytidine amidohydrolase family.

The catalysed reaction is N(4)-acetylcytidine + H2O = cytidine + acetate + H(+). It carries out the reaction N(4)-acetyl-2'-deoxycytidine + H2O = 2'-deoxycytidine + acetate + H(+). The enzyme catalyses N(4)-acetylcytosine + H2O = cytosine + acetate + H(+). Functionally, catalyzes the hydrolysis of N(4)-acetylcytidine (ac4C). This Pasteurella multocida (strain Pm70) protein is N(4)-acetylcytidine amidohydrolase.